The chain runs to 205 residues: Arginine exporter protein ArgO (205 aa).

6 helical membrane-spanning segments follow: residues 1–21 (MLAV…PLGP), 42–62 (LCAL…SALL), 67–87 (LLLA…GWGA), 111–131 (ILVT…DTFV), 147–167 (WFAL…AFLA), and 185–205 (LFVG…GFGL).

This sequence belongs to the LysE/ArgO transporter (TC 2.A.75) family.

It is found in the cell inner membrane. The catalysed reaction is L-arginine(in) = L-arginine(out). In terms of biological role, involved in the export of arginine. Important to control the intracellular level of arginine and the correct balance between arginine and lysine. The protein is Arginine exporter protein ArgO of Yersinia pseudotuberculosis serotype O:3 (strain YPIII).